Here is a 125-residue protein sequence, read N- to C-terminus: Small ribosomal subunit protein uS13 (125 aa).

Residues 99–125 (RGQRTKTNARTRKGKRKTVANKKMAAK) form a disordered region.

Belongs to the universal ribosomal protein uS13 family. As to quaternary structure, part of the 30S ribosomal subunit. Forms a loose heterodimer with protein S19. Forms two bridges to the 50S subunit in the 70S ribosome.

Functionally, located at the top of the head of the 30S subunit, it contacts several helices of the 16S rRNA. In the 70S ribosome it contacts the 23S rRNA (bridge B1a) and protein L5 of the 50S subunit (bridge B1b), connecting the 2 subunits; these bridges are implicated in subunit movement. Contacts the tRNAs in the A and P-sites. In Borrelia turicatae (strain 91E135), this protein is Small ribosomal subunit protein uS13.